The sequence spans 128 residues: UPF0102 protein GSU0650 (128 aa).

It belongs to the UPF0102 family.

The polypeptide is UPF0102 protein GSU0650 (Geobacter sulfurreducens (strain ATCC 51573 / DSM 12127 / PCA)).